The primary structure comprises 97 residues: Coiled-coil domain-containing protein 167 (97 aa).

A coiled-coil region spans residues 36-80 (LRKMELTEEGRKSLEKEKSSLSSRLSNYERELKSLRHENRKNMLL). The chain crosses the membrane as a helical span at residues 78-95 (MLLSVAIFLLFAVGYYCW).

It localises to the membrane. This is Coiled-coil domain-containing protein 167 (ccdc167) from Xenopus tropicalis (Western clawed frog).